We begin with the raw amino-acid sequence, 270 residues long: Pyrroline-5-carboxylate reductase (270 aa).

This sequence belongs to the pyrroline-5-carboxylate reductase family.

It localises to the cytoplasm. It carries out the reaction L-proline + NADP(+) = (S)-1-pyrroline-5-carboxylate + NADPH + 2 H(+). The enzyme catalyses L-proline + NAD(+) = (S)-1-pyrroline-5-carboxylate + NADH + 2 H(+). It participates in amino-acid biosynthesis; L-proline biosynthesis; L-proline from L-glutamate 5-semialdehyde: step 1/1. Its function is as follows. Catalyzes the reduction of 1-pyrroline-5-carboxylate (PCA) to L-proline. The polypeptide is Pyrroline-5-carboxylate reductase (Methanosarcina acetivorans (strain ATCC 35395 / DSM 2834 / JCM 12185 / C2A)).